Reading from the N-terminus, the 316-residue chain is Methionyl-tRNA formyltransferase (316 aa).

109 to 112 (SALP) contacts (6S)-5,6,7,8-tetrahydrofolate.

The protein belongs to the Fmt family.

The catalysed reaction is L-methionyl-tRNA(fMet) + (6R)-10-formyltetrahydrofolate = N-formyl-L-methionyl-tRNA(fMet) + (6S)-5,6,7,8-tetrahydrofolate + H(+). Attaches a formyl group to the free amino group of methionyl-tRNA(fMet). The formyl group appears to play a dual role in the initiator identity of N-formylmethionyl-tRNA by promoting its recognition by IF2 and preventing the misappropriation of this tRNA by the elongation apparatus. This is Methionyl-tRNA formyltransferase from Nocardioides sp. (strain ATCC BAA-499 / JS614).